Consider the following 316-residue polypeptide: Acetyl-coenzyme A carboxylase carboxyl transferase subunit beta (316 aa).

In terms of domain architecture, CoA carboxyltransferase N-terminal spans 39-308 (LWHKCSKCGV…TPPMVLWETM (270 aa)). Residues Cys43, Cys46, Cys62, and Cys65 each contribute to the Zn(2+) site. Residues 43-65 (CSKCGVLTYTKDLRANQMVCVEC) form a C4-type zinc finger.

The protein belongs to the AccD/PCCB family. As to quaternary structure, acetyl-CoA carboxylase is a heterohexamer composed of biotin carboxyl carrier protein (AccB), biotin carboxylase (AccC) and two subunits each of ACCase subunit alpha (AccA) and ACCase subunit beta (AccD). It depends on Zn(2+) as a cofactor.

Its subcellular location is the cytoplasm. The enzyme catalyses N(6)-carboxybiotinyl-L-lysyl-[protein] + acetyl-CoA = N(6)-biotinyl-L-lysyl-[protein] + malonyl-CoA. It functions in the pathway lipid metabolism; malonyl-CoA biosynthesis; malonyl-CoA from acetyl-CoA: step 1/1. Its function is as follows. Component of the acetyl coenzyme A carboxylase (ACC) complex. Biotin carboxylase (BC) catalyzes the carboxylation of biotin on its carrier protein (BCCP) and then the CO(2) group is transferred by the transcarboxylase to acetyl-CoA to form malonyl-CoA. The protein is Acetyl-coenzyme A carboxylase carboxyl transferase subunit beta of Nostoc sp. (strain PCC 7120 / SAG 25.82 / UTEX 2576).